We begin with the raw amino-acid sequence, 416 residues long: Gamma-glutamyl phosphate reductase (416 aa).

Belongs to the gamma-glutamyl phosphate reductase family.

The protein localises to the cytoplasm. It carries out the reaction L-glutamate 5-semialdehyde + phosphate + NADP(+) = L-glutamyl 5-phosphate + NADPH + H(+). It participates in amino-acid biosynthesis; L-proline biosynthesis; L-glutamate 5-semialdehyde from L-glutamate: step 2/2. Catalyzes the NADPH-dependent reduction of L-glutamate 5-phosphate into L-glutamate 5-semialdehyde and phosphate. The product spontaneously undergoes cyclization to form 1-pyrroline-5-carboxylate. The chain is Gamma-glutamyl phosphate reductase from Streptococcus uberis (strain ATCC BAA-854 / 0140J).